The chain runs to 78 residues: Exodeoxyribonuclease 7 small subunit (78 aa).

It belongs to the XseB family. As to quaternary structure, heterooligomer composed of large and small subunits.

Its subcellular location is the cytoplasm. The enzyme catalyses Exonucleolytic cleavage in either 5'- to 3'- or 3'- to 5'-direction to yield nucleoside 5'-phosphates.. Bidirectionally degrades single-stranded DNA into large acid-insoluble oligonucleotides, which are then degraded further into small acid-soluble oligonucleotides. In Synechococcus sp. (strain JA-2-3B'a(2-13)) (Cyanobacteria bacterium Yellowstone B-Prime), this protein is Exodeoxyribonuclease 7 small subunit.